Here is a 379-residue protein sequence, read N- to C-terminus: Chaperone protein DnaJ (379 aa).

In terms of domain architecture, J spans 5–70 (DYYEVLGVGK…EKKAAYDQYG (66 aa)). The segment at 139 to 217 (GHEAQIRVPH…CHGQGKLKSQ (79 aa)) adopts a CR-type zinc-finger fold. Zn(2+)-binding residues include cysteine 152, cysteine 155, cysteine 169, cysteine 172, cysteine 191, cysteine 194, cysteine 205, and cysteine 208. CXXCXGXG motif repeat units follow at residues 152–159 (CEHCHGNG), 169–176 (CPTCNGVG), 191–198 (CPKCHGSG), and 205–212 (CTKCHGQG).

This sequence belongs to the DnaJ family. As to quaternary structure, homodimer. The cofactor is Zn(2+).

The protein resides in the cytoplasm. In terms of biological role, participates actively in the response to hyperosmotic and heat shock by preventing the aggregation of stress-denatured proteins and by disaggregating proteins, also in an autonomous, DnaK-independent fashion. Unfolded proteins bind initially to DnaJ; upon interaction with the DnaJ-bound protein, DnaK hydrolyzes its bound ATP, resulting in the formation of a stable complex. GrpE releases ADP from DnaK; ATP binding to DnaK triggers the release of the substrate protein, thus completing the reaction cycle. Several rounds of ATP-dependent interactions between DnaJ, DnaK and GrpE are required for fully efficient folding. Also involved, together with DnaK and GrpE, in the DNA replication of plasmids through activation of initiation proteins. The chain is Chaperone protein DnaJ from Cupriavidus metallidurans (strain ATCC 43123 / DSM 2839 / NBRC 102507 / CH34) (Ralstonia metallidurans).